Here is a 438-residue protein sequence, read N- to C-terminus: MPRKFLGEKIDRNTDFLRPSSLTLTADDLKVIPDFKCDDDDAVLSGNKTGKRLSRKFGGTMRLKQRLESVPELFLHDFRKRRGQKLQERNNDEQISRAKLPPHLSGLRRPNGLPARKPLRTITEVLPPVTSYNNSIEQNEDDLYYVEKKDPKEHVVETNHKEMRPLDKPLIEKVENVYLEPLIFPVQVSEPVNQMSIPMEELQKYGKSDSEILFDEIISAYEPHMETTGDVSNVLNSEILSVLDRVSNAPKKNWNLMAPKVISAEAIEENKRLSINSIASSGRTPESTRNSRFCENLSSPEYSTAASVSDRWSSGDEFSDVASSNPNSHAISHDGSYTTALGSIPSLAGSVDNLDILDQKDILSPTVSNEIITVKPVPQNTVETMHVTKIVIKPQLFLDWESEEEDDPIDALSRQVDNIEIASVYSGSSSVYSDHFAT.

Its subcellular location is the bud neck. Its function is as follows. May be involved in the establishment of the daughter fate. The chain is Protein DSE3 (DSE3) from Candida glabrata (strain ATCC 2001 / BCRC 20586 / JCM 3761 / NBRC 0622 / NRRL Y-65 / CBS 138) (Yeast).